Consider the following 519-residue polypeptide: Putative ATP-dependent RNA helicase L396 (519 aa).

The Helicase ATP-binding domain maps to 110 to 258 (IKGMEEGGGG…IINWYMGPIL (149 aa)). ATP is bound at residue 123–130 (MGCGSGKT). Residues 211–214 (DEVH) carry the DEAH box motif. The Helicase C-terminal domain maps to 317 to 457 (YLIQELFDMG…KQKYNIQKYY (141 aa)).

This sequence belongs to the DEAD box helicase family. DEAH subfamily.

It carries out the reaction ATP + H2O = ADP + phosphate + H(+). This Acanthamoeba polyphaga (Amoeba) protein is Putative ATP-dependent RNA helicase L396.